The chain runs to 848 residues: Translation initiation factor IF-2 (848 aa).

The interval 1 to 265 (MSDTDGKKPL…GNQRAEKQVR (265 aa)) is disordered. Basic and acidic residues predominate over residues 89 to 162 (KAREVEEAAQ…AEIAKPKTEA (74 aa)). Residues 163-179 (RPATPADRAAAEAAAVR) are compositionally biased toward low complexity. The span at 191 to 219 (RKTDRDRDTRGGGGDDRDSRNKGRDDSRR) shows a compositional bias: basic and acidic residues. Positions 346 to 514 (PRAPIITIMG…AIALQAEILE (169 aa)) constitute a tr-type G domain. The interval 355–362 (GHVDHGKT) is G1. 355–362 (GHVDHGKT) serves as a coordination point for GTP. Residues 380-384 (GITQH) are G2. The G3 stretch occupies residues 402–405 (DTPG). GTP-binding positions include 402–406 (DTPGH) and 456–459 (NKID). The G4 stretch occupies residues 456 to 459 (NKID). The segment at 492-494 (SAK) is G5.

This sequence belongs to the TRAFAC class translation factor GTPase superfamily. Classic translation factor GTPase family. IF-2 subfamily.

The protein localises to the cytoplasm. Functionally, one of the essential components for the initiation of protein synthesis. Protects formylmethionyl-tRNA from spontaneous hydrolysis and promotes its binding to the 30S ribosomal subunits. Also involved in the hydrolysis of GTP during the formation of the 70S ribosomal complex. The polypeptide is Translation initiation factor IF-2 (Paracoccus denitrificans (strain Pd 1222)).